A 161-amino-acid chain; its full sequence is ATP synthase subunit b' (161 aa).

Residues Val30 to Tyr47 traverse the membrane as a helical segment.

It belongs to the ATPase B chain family. As to quaternary structure, F-type ATPases have 2 components, F(1) - the catalytic core - and F(0) - the membrane proton channel. F(1) has five subunits: alpha(3), beta(3), gamma(1), delta(1), epsilon(1). F(0) has four main subunits: a(1), b(1), b'(1) and c(10-14). The alpha and beta chains form an alternating ring which encloses part of the gamma chain. F(1) is attached to F(0) by a central stalk formed by the gamma and epsilon chains, while a peripheral stalk is formed by the delta, b and b' chains.

The protein resides in the cellular thylakoid membrane. Functionally, f(1)F(0) ATP synthase produces ATP from ADP in the presence of a proton or sodium gradient. F-type ATPases consist of two structural domains, F(1) containing the extramembraneous catalytic core and F(0) containing the membrane proton channel, linked together by a central stalk and a peripheral stalk. During catalysis, ATP synthesis in the catalytic domain of F(1) is coupled via a rotary mechanism of the central stalk subunits to proton translocation. In terms of biological role, component of the F(0) channel, it forms part of the peripheral stalk, linking F(1) to F(0). The b'-subunit is a diverged and duplicated form of b found in plants and photosynthetic bacteria. This Picosynechococcus sp. (strain ATCC 27264 / PCC 7002 / PR-6) (Agmenellum quadruplicatum) protein is ATP synthase subunit b'.